The sequence spans 690 residues: MAKKKSEEHSGADANDSDYNEEPNFDDPPGYVDNISDEDLLGDMLAQRPSEADGVESVVVVDNMPKVEPSRLEKLKSVINKLFSQCGEIVNVVYPVDEEGKTKGYAFMEFKTASQAEDAVKKLNNHRLDKNYTFAVNLFTDFQKYENIPEKWEPPTVQPFKVQSDLYNFINDPDAYDQYCVAAETAPNCVQVGFWQNTLPEPNELETRERFTDTFVKWSPLGTYVVTFHKPGVAIWGGSSFQKIQKFPHPGTQFVEFSPCENYLVTYGPTPTGQKIIIWDIRTGAEKRSFVGDGMSVLSMFRWSHDDKFVARMGENSIHIYETPSFYLLDLKSIKIAGIRGFSWSPTDNVIAYWVEEQNQIPARVTLMEIPKKREIRNKNLFHVADCKLHWQKSGDYLCVKVDRYSKLKKDKKELDVKFLGMFYNFEIFHMREKEIPVDSVEIRELILAFAWEPIGNKFSIIHGEPNSANVSFYEVNKGVKPSLVKRLEKKSCTHLFWSPRGQFIVMANLTMGTFEFVDTTNDYIISASPDHFRASEVEWDPTGRYVVTGVSSWKVKEDTGFNMYTFQGRIIRRTILKNFVQFLWRPRPPTLLSEEKQKEIKKNLKKYYPIFEQKDRLRLTRASKELLEKRAQLRETFMEYRNKRIAEWKDQKSRRIMLRGHVDTDNLETDEVDEEVVEFLVKEEVTLLE.

Residues 1 to 11 show a composition bias toward basic and acidic residues; the sequence is MAKKKSEEHSG. The segment at 1–33 is disordered; sequence MAKKKSEEHSGADANDSDYNEEPNFDDPPGYVD. Acidic residues predominate over residues 15-25; sequence NDSDYNEEPNF. One can recognise an RRM domain in the interval 57 to 141; the sequence is SVVVVDNMPK…YTFAVNLFTD (85 aa). 5 WD repeats span residues 207–246, 292–331, 334–369, 442–484, and 530–575; these read TRER…KIQK, GDGM…LLDL, IKIA…TLME, EIRE…KPSL, and PDHF…IRRT. Residues 613-646 adopt a coiled-coil conformation; it reads EQKDRLRLTRASKELLEKRAQLRETFMEYRNKRI.

It belongs to the eIF-3 subunit B family. As to quaternary structure, component of the eukaryotic translation initiation factor 3 (eIF-3) complex. The eIF-3 complex interacts with pix. Interacts with mxt.

It is found in the cytoplasm. Functionally, RNA-binding component of the eukaryotic translation initiation factor 3 (eIF-3) complex, which is involved in protein synthesis of a specialized repertoire of mRNAs and, together with other initiation factors, stimulates binding of mRNA and methionyl-tRNAi to the 40S ribosome. The eIF-3 complex specifically targets and initiates translation of a subset of mRNAs involved in cell proliferation. In Drosophila mojavensis (Fruit fly), this protein is Eukaryotic translation initiation factor 3 subunit B.